We begin with the raw amino-acid sequence, 238 residues long: tRNA (guanine-N(7)-)-methyltransferase (238 aa).

Residues Glu68, Glu93, Asp120, and Asp143 each coordinate S-adenosyl-L-methionine. The active site involves Asp143. Substrate-binding positions include Lys147, Asp179, and Thr216–Glu219.

This sequence belongs to the class I-like SAM-binding methyltransferase superfamily. TrmB family.

The enzyme catalyses guanosine(46) in tRNA + S-adenosyl-L-methionine = N(7)-methylguanosine(46) in tRNA + S-adenosyl-L-homocysteine. The protein operates within tRNA modification; N(7)-methylguanine-tRNA biosynthesis. In terms of biological role, catalyzes the formation of N(7)-methylguanine at position 46 (m7G46) in tRNA. In Shewanella sp. (strain MR-4), this protein is tRNA (guanine-N(7)-)-methyltransferase.